The chain runs to 62 residues: Large ribosomal subunit protein bL35 (62 aa).

Positions 31–62 are disordered; the sequence is HLAQNKTTKQKRQSRKSAQMHSSDLKRFKALI. Positions 53–62 are enriched in basic and acidic residues; sequence SDLKRFKALI.

The protein belongs to the bacterial ribosomal protein bL35 family.

This is Large ribosomal subunit protein bL35 from Mycoplasmopsis agalactiae (strain NCTC 10123 / CIP 59.7 / PG2) (Mycoplasma agalactiae).